We begin with the raw amino-acid sequence, 132 residues long: Small ribosomal subunit protein bS6 (132 aa).

This sequence belongs to the bacterial ribosomal protein bS6 family.

Functionally, binds together with bS18 to 16S ribosomal RNA. This is Small ribosomal subunit protein bS6 from Chlorobium chlorochromatii (strain CaD3).